A 127-amino-acid chain; its full sequence is Large ribosomal subunit protein eL8 (127 aa).

Belongs to the eukaryotic ribosomal protein eL8 family. As to quaternary structure, part of the 50S ribosomal subunit. Probably part of the RNase P complex.

It localises to the cytoplasm. Functionally, multifunctional RNA-binding protein that recognizes the K-turn motif in ribosomal RNA, the RNA component of RNase P, box H/ACA, box C/D and box C'/D' sRNAs. In Saccharolobus islandicus (strain Y.N.15.51 / Yellowstone #2) (Sulfolobus islandicus), this protein is Large ribosomal subunit protein eL8.